A 300-amino-acid chain; its full sequence is GTP-binding protein At2g22870 (300 aa).

In terms of domain architecture, EngB-type G spans 119–297; it reads DRPEIAILGR…LLHMSQLRNY (179 aa). GTP-binding positions include 127–134, 154–158, 172–175, 239–242, and 276–278; these read GRSNVGKS, GKTQL, DLPG, TKCD, and TSS. The Mg(2+) site is built by serine 134 and threonine 156.

Belongs to the TRAFAC class TrmE-Era-EngA-EngB-Septin-like GTPase superfamily. EngB GTPase family. The cofactor is Mg(2+).

In Arabidopsis thaliana (Mouse-ear cress), this protein is GTP-binding protein At2g22870 (EMB2001).